Reading from the N-terminus, the 405-residue chain is Serine/threonine transporter SstT (405 aa).

8 consecutive transmembrane segments (helical) span residues 13–33 (GGSL…LAGF), 43–63 (FLGD…VFVL), 82–102 (IILL…LMSF), 141–161 (ALIN…GIAL), 185–205 (FVIC…IAQT), 217–237 (LGVL…LIVF), 298–318 (MAGA…TLGI), and 339–359 (ASGV…LFGI).

The protein belongs to the dicarboxylate/amino acid:cation symporter (DAACS) (TC 2.A.23) family.

It is found in the cell inner membrane. The catalysed reaction is L-serine(in) + Na(+)(in) = L-serine(out) + Na(+)(out). It catalyses the reaction L-threonine(in) + Na(+)(in) = L-threonine(out) + Na(+)(out). Its function is as follows. Involved in the import of serine and threonine into the cell, with the concomitant import of sodium (symport system). The sequence is that of Serine/threonine transporter SstT from Shewanella amazonensis (strain ATCC BAA-1098 / SB2B).